Reading from the N-terminus, the 342-residue chain is Phenylalanine--tRNA ligase alpha subunit (342 aa).

Glutamate 257 serves as a coordination point for Mg(2+).

The protein belongs to the class-II aminoacyl-tRNA synthetase family. Phe-tRNA synthetase alpha subunit type 1 subfamily. As to quaternary structure, tetramer of two alpha and two beta subunits. Mg(2+) is required as a cofactor.

The protein resides in the cytoplasm. It catalyses the reaction tRNA(Phe) + L-phenylalanine + ATP = L-phenylalanyl-tRNA(Phe) + AMP + diphosphate + H(+). The polypeptide is Phenylalanine--tRNA ligase alpha subunit (Chlamydia trachomatis serovar A (strain ATCC VR-571B / DSM 19440 / HAR-13)).